The sequence spans 500 residues: Galactofuranose transporter ATP-binding protein YtfR (500 aa).

ABC transporter domains are found at residues 10 to 245 (LRTE…LGRE) and 259 to 497 (LSDK…IMNA). Residue 42–49 (GENGAGKS) participates in ATP binding.

Belongs to the ABC transporter superfamily. In terms of assembly, the complex is composed of two ATP-binding proteins (YtfR), two transmembrane proteins (YtfT and YjfF) and a solute-binding protein (YtfQ).

The protein localises to the cell inner membrane. It catalyses the reaction D-galactofuranose(out) + ATP + H2O = D-galactofuranose(in) + ADP + phosphate + H(+). Functionally, part of the ABC transporter complex YtfQRT-YjfF involved in galactofuranose transport. Responsible for energy coupling to the transport system. The chain is Galactofuranose transporter ATP-binding protein YtfR (ytfR) from Escherichia coli (strain K12).